Here is a 356-residue protein sequence, read N- to C-terminus: Protein pelota homolog (356 aa).

Belongs to the eukaryotic release factor 1 family. Pelota subfamily. In terms of assembly, monomer. The cofactor is a divalent metal cation.

It is found in the cytoplasm. Its function is as follows. May function in recognizing stalled ribosomes, interact with stem-loop structures in stalled mRNA molecules, and effect endonucleolytic cleavage of the mRNA. May play a role in the release non-functional ribosomes and degradation of damaged mRNAs. Has endoribonuclease activity. The protein is Protein pelota homolog of Staphylothermus marinus (strain ATCC 43588 / DSM 3639 / JCM 9404 / F1).